The following is a 314-amino-acid chain: Coproporphyrin III ferrochelatase (314 aa).

Positions 186 and 268 each coordinate Fe(2+).

Belongs to the ferrochelatase family.

Its subcellular location is the cytoplasm. It carries out the reaction Fe-coproporphyrin III + 2 H(+) = coproporphyrin III + Fe(2+). It participates in porphyrin-containing compound metabolism; protoheme biosynthesis. Involved in coproporphyrin-dependent heme b biosynthesis. Catalyzes the insertion of ferrous iron into coproporphyrin III to form Fe-coproporphyrin III. This is Coproporphyrin III ferrochelatase from Lactococcus lactis subsp. lactis (strain IL1403) (Streptococcus lactis).